A 305-amino-acid polypeptide reads, in one-letter code: Serine/threonine-protein phosphatase 6 catalytic subunit (305 aa).

Mn(2+)-binding residues include Asp54, His56, Asp82, and Asn114. His115 acts as the Proton donor in catalysis. Mn(2+) contacts are provided by His164 and His238.

Belongs to the PPP phosphatase family. PP-6 (PP-V) subfamily. The cofactor is Mn(2+).

It carries out the reaction O-phospho-L-seryl-[protein] + H2O = L-seryl-[protein] + phosphate. It catalyses the reaction O-phospho-L-threonyl-[protein] + H2O = L-threonyl-[protein] + phosphate. The polypeptide is Serine/threonine-protein phosphatase 6 catalytic subunit (ppp6c) (Dictyostelium discoideum (Social amoeba)).